Consider the following 254-residue polypeptide: Imidazole glycerol phosphate synthase subunit HisF (254 aa).

Residues aspartate 12 and aspartate 132 contribute to the active site.

This sequence belongs to the HisA/HisF family. In terms of assembly, heterodimer of HisH and HisF.

It is found in the cytoplasm. It carries out the reaction 5-[(5-phospho-1-deoxy-D-ribulos-1-ylimino)methylamino]-1-(5-phospho-beta-D-ribosyl)imidazole-4-carboxamide + L-glutamine = D-erythro-1-(imidazol-4-yl)glycerol 3-phosphate + 5-amino-1-(5-phospho-beta-D-ribosyl)imidazole-4-carboxamide + L-glutamate + H(+). The protein operates within amino-acid biosynthesis; L-histidine biosynthesis; L-histidine from 5-phospho-alpha-D-ribose 1-diphosphate: step 5/9. In terms of biological role, IGPS catalyzes the conversion of PRFAR and glutamine to IGP, AICAR and glutamate. The HisF subunit catalyzes the cyclization activity that produces IGP and AICAR from PRFAR using the ammonia provided by the HisH subunit. This is Imidazole glycerol phosphate synthase subunit HisF from Symbiobacterium thermophilum (strain DSM 24528 / JCM 14929 / IAM 14863 / T).